We begin with the raw amino-acid sequence, 344 residues long: KRR1 small subunit processome component homolog (344 aa).

The KH domain occupies 125-193; it reads DIIKIGNLVH…VRDIVLETMN (69 aa). A compositionally biased stretch (basic residues) spans 232 to 245; it reads NISKRKQPKVKKQK. Disordered regions lie at residues 232-260 and 273-326; these read NISK…ESKV and QEQK…TKVD. Residues 270–295 are a coiled coil; it reads FLNQEQKQAKRNQGRTEKQKEAAKRQ. 2 stretches are compositionally biased toward basic and acidic residues: residues 283–302 and 315–326; these read GRTE…RNKD and RKKEDGSSTKVD.

It belongs to the KRR1 family. In terms of assembly, monomer. Component of the ribosomal small subunit (SSU) processome.

The protein resides in the nucleus. The protein localises to the nucleolus. Required for 40S ribosome biogenesis. Involved in nucleolar processing of pre-18S ribosomal RNA and ribosome assembly. Binds to RNA. Required for female germline development, cell viability during eye development and for survival of dividing cells and epithelial cells during early wing disk development. The chain is KRR1 small subunit processome component homolog from Drosophila yakuba (Fruit fly).